A 400-amino-acid polypeptide reads, in one-letter code: Calsequestrin-2 (400 aa).

The signal sequence occupies residues 1 to 19; it reads MKRTHLFIVGVYVLSSCRA. A Phosphotyrosine modification is found at Tyr-282. Residue Asn-335 is glycosylated (N-linked (GlcNAc...) asparagine). Positions 365-400 are disordered; it reads VLSGKINTEDDDDEDDDDDNSDEEDNDDSDDDDDDE. The segment covering 373 to 400 has biased composition (acidic residues); sequence EDDDDEDDDDDNSDEEDNDDSDDDDDDE.

The protein belongs to the calsequestrin family. Monomer, homodimer and homooligomer. Mostly monomeric in the absence of calcium. Forms higher oligomers in a calcium-dependent manner. Dimers associate to form tetramers, that then form linear homomer chains. Interacts with ASPH and TRDN. Post-translationally, phosphorylation in the C-terminus, probably by CK2, moderately increases calcium buffering capacity. In terms of processing, N-glycosylated.

The protein localises to the sarcoplasmic reticulum lumen. Functionally, calsequestrin is a high-capacity, moderate affinity, calcium-binding protein and thus acts as an internal calcium store in muscle. Calcium ions are bound by clusters of acidic residues at the protein surface, especially at the interface between subunits. Can bind around 60 Ca(2+) ions. Regulates the release of lumenal Ca(2+) via the calcium release channel RYR2; this plays an important role in triggering muscle contraction. Plays a role in excitation-contraction coupling in the heart and in regulating the rate of heart beats. In Pongo abelii (Sumatran orangutan), this protein is Calsequestrin-2 (CASQ2).